The chain runs to 172 residues: Translation initiation factor IF-3 (172 aa).

It belongs to the IF-3 family. In terms of assembly, monomer.

It localises to the cytoplasm. IF-3 binds to the 30S ribosomal subunit and shifts the equilibrium between 70S ribosomes and their 50S and 30S subunits in favor of the free subunits, thus enhancing the availability of 30S subunits on which protein synthesis initiation begins. This chain is Translation initiation factor IF-3, found in Campylobacter jejuni subsp. jejuni serotype O:6 (strain 81116 / NCTC 11828).